Here is a 281-residue protein sequence, read N- to C-terminus: Pantothenate synthetase (281 aa).

30–37 is a binding site for ATP; sequence MGALHAGH. The Proton donor role is filled by histidine 37. Residue glutamine 64 coordinates (R)-pantoate. Beta-alanine is bound at residue glutamine 64. Position 150 to 153 (150 to 153) interacts with ATP; it reads GKKD. Position 156 (glutamine 156) interacts with (R)-pantoate. Residues valine 179 and 187-190 contribute to the ATP site; that span reads YSSR.

Belongs to the pantothenate synthetase family. Homodimer.

It localises to the cytoplasm. It catalyses the reaction (R)-pantoate + beta-alanine + ATP = (R)-pantothenate + AMP + diphosphate + H(+). It participates in cofactor biosynthesis; (R)-pantothenate biosynthesis; (R)-pantothenate from (R)-pantoate and beta-alanine: step 1/1. Catalyzes the condensation of pantoate with beta-alanine in an ATP-dependent reaction via a pantoyl-adenylate intermediate. The polypeptide is Pantothenate synthetase (Akkermansia muciniphila (strain ATCC BAA-835 / DSM 22959 / JCM 33894 / BCRC 81048 / CCUG 64013 / CIP 107961 / Muc)).